A 350-amino-acid chain; its full sequence is Uroporphyrinogen decarboxylase (350 aa).

Substrate contacts are provided by residues 28-32, F47, D78, Y155, S210, and H325; that span reads RQAGR.

This sequence belongs to the uroporphyrinogen decarboxylase family. As to quaternary structure, homodimer.

Its subcellular location is the cytoplasm. It catalyses the reaction uroporphyrinogen III + 4 H(+) = coproporphyrinogen III + 4 CO2. It participates in porphyrin-containing compound metabolism; protoporphyrin-IX biosynthesis; coproporphyrinogen-III from 5-aminolevulinate: step 4/4. In terms of biological role, catalyzes the decarboxylation of four acetate groups of uroporphyrinogen-III to yield coproporphyrinogen-III. The chain is Uroporphyrinogen decarboxylase from Nostoc sp. (strain PCC 7120 / SAG 25.82 / UTEX 2576).